We begin with the raw amino-acid sequence, 573 residues long: 2-succinyl-5-enolpyruvyl-6-hydroxy-3-cyclohexene-1-carboxylate synthase (573 aa).

This sequence belongs to the TPP enzyme family. MenD subfamily. Homodimer. Mg(2+) is required as a cofactor. It depends on Mn(2+) as a cofactor. Requires thiamine diphosphate as cofactor.

The enzyme catalyses isochorismate + 2-oxoglutarate + H(+) = 5-enolpyruvoyl-6-hydroxy-2-succinyl-cyclohex-3-ene-1-carboxylate + CO2. It participates in quinol/quinone metabolism; 1,4-dihydroxy-2-naphthoate biosynthesis; 1,4-dihydroxy-2-naphthoate from chorismate: step 2/7. The protein operates within quinol/quinone metabolism; menaquinone biosynthesis. Catalyzes the thiamine diphosphate-dependent decarboxylation of 2-oxoglutarate and the subsequent addition of the resulting succinic semialdehyde-thiamine pyrophosphate anion to isochorismate to yield 2-succinyl-5-enolpyruvyl-6-hydroxy-3-cyclohexene-1-carboxylate (SEPHCHC). This Shewanella baltica (strain OS195) protein is 2-succinyl-5-enolpyruvyl-6-hydroxy-3-cyclohexene-1-carboxylate synthase.